We begin with the raw amino-acid sequence, 222 residues long: Millepora cytotoxin-1 (222 aa).

Residues 1-20 (MVTLYLHVPILLLVVITARA) form the signal peptide. A propeptide spanning residues 21 to 75 (APKPDTHNPFDELSSVAEKQDLHYGDRSRKDPFIAQNDVGNNFRDGTQENLTKVR) is cleaved from the precursor. 3 disulfides stabilise this stretch: cysteine 89–cysteine 115, cysteine 142–cysteine 168, and cysteine 179–cysteine 222. 3 consecutive repeats follow at residues 100–109 (SIHDNHYEDR), 153–162 (SIHDNYYEDR), and 206–215 (SQHNNYYEDR).

It belongs to the dermatopontin family. In terms of processing, is not glycosylated.

Its subcellular location is the secreted. The protein resides in the nematocyst. Its function is as follows. Is potently cytotoxic (EC(50) value 79 ng/mL) towards L1210 mouse leukemia cells, has hemagglutination activity on sheep erythrocytes, and is lethal in crayfish. Has no phospholipase A2 activity. The polypeptide is Millepora cytotoxin-1 (Millepora dichotoma (Net fire coral)).